The sequence spans 594 residues: Arginine--tRNA ligase (594 aa).

The 'HIGH' region signature appears at 139-149 (ANPTGPLHVGH).

It belongs to the class-I aminoacyl-tRNA synthetase family. In terms of assembly, monomer.

The protein resides in the cytoplasm. It catalyses the reaction tRNA(Arg) + L-arginine + ATP = L-arginyl-tRNA(Arg) + AMP + diphosphate. In Burkholderia pseudomallei (strain 1106a), this protein is Arginine--tRNA ligase.